Consider the following 217-residue polypeptide: Ribonuclease HII (217 aa).

The region spanning 25-215 (KLIAGVDESG…VKHVISDINR (191 aa)) is the RNase H type-2 domain. A divalent metal cation-binding residues include Asp-31, Glu-32, and Asp-123.

Belongs to the RNase HII family. Requires Mn(2+) as cofactor. The cofactor is Mg(2+).

The protein resides in the cytoplasm. It carries out the reaction Endonucleolytic cleavage to 5'-phosphomonoester.. Its function is as follows. Endonuclease that specifically degrades the RNA of RNA-DNA hybrids. The sequence is that of Ribonuclease HII from Blochmanniella pennsylvanica (strain BPEN).